The primary structure comprises 354 residues: Photosystem II protein D1 (354 aa).

Thr-2 is modified (N-acetylthreonine). At Thr-2 the chain carries Phosphothreonine. 3 helical membrane-spanning segments follow: residues 29 to 46 (YIGWFGVLMIPTLLTATS), 118 to 133 (HFLLGVACYMGREWEL), and 142 to 156 (WIAVAYSAPVAAATA). His-118 provides a ligand contact to chlorophyll a. Tyr-126 is a binding site for pheophytin a. Positions 170 and 189 each coordinate [CaMn4O5] cluster. The helical transmembrane segment at 197 to 218 (FHMLGVAGVFGGSLFSAMHGSL) threads the bilayer. His-198 contributes to the chlorophyll a binding site. Residues His-215 and 264 to 265 (SF) contribute to the a quinone site. His-215 contacts Fe cation. A Fe cation-binding site is contributed by His-272. A helical transmembrane segment spans residues 274–288 (FLAAWPVVGIWFTAL). His-332, Glu-333, Asp-342, and Ala-344 together coordinate [CaMn4O5] cluster. Positions 345–354 (ASIEAPSLNG) are excised as a propeptide.

This sequence belongs to the reaction center PufL/M/PsbA/D family. PSII is composed of 1 copy each of membrane proteins PsbA, PsbB, PsbC, PsbD, PsbE, PsbF, PsbH, PsbI, PsbJ, PsbK, PsbL, PsbM, PsbT, PsbX, PsbY, PsbZ, Psb30/Ycf12, at least 3 peripheral proteins of the oxygen-evolving complex and a large number of cofactors. It forms dimeric complexes. The D1/D2 heterodimer binds P680, chlorophylls that are the primary electron donor of PSII, and subsequent electron acceptors. It shares a non-heme iron and each subunit binds pheophytin, quinone, additional chlorophylls, carotenoids and lipids. D1 provides most of the ligands for the Mn4-Ca-O5 cluster of the oxygen-evolving complex (OEC). There is also a Cl(-1) ion associated with D1 and D2, which is required for oxygen evolution. The PSII complex binds additional chlorophylls, carotenoids and specific lipids. serves as cofactor. In terms of processing, tyr-161 forms a radical intermediate that is referred to as redox-active TyrZ, YZ or Y-Z. C-terminally processed by CTPA; processing is essential to allow assembly of the oxygen-evolving complex and thus photosynthetic growth.

The protein localises to the plastid. It is found in the chloroplast thylakoid membrane. It carries out the reaction 2 a plastoquinone + 4 hnu + 2 H2O = 2 a plastoquinol + O2. In terms of biological role, photosystem II (PSII) is a light-driven water:plastoquinone oxidoreductase that uses light energy to abstract electrons from H(2)O, generating O(2) and a proton gradient subsequently used for ATP formation. It consists of a core antenna complex that captures photons, and an electron transfer chain that converts photonic excitation into a charge separation. The D1/D2 (PsbA/PsbD) reaction center heterodimer binds P680, the primary electron donor of PSII as well as several subsequent electron acceptors. The polypeptide is Photosystem II protein D1 (Selaginella uncinata (Blue spike-moss)).